A 364-amino-acid polypeptide reads, in one-letter code: MKRFFKPIEKENSPAAKKPCLSPEKRDGDGDGVEEEKNQNEPSKFMTWNANSFLLRVKNDWSQFSKFVSDFDPDVIAIQEVRMPAAGGKGKPKNHEELSDDTKVLREEKQILTRALSSPPFGNYGVWWSLADSKYAGTALLVKKCFKPRKVYFNLDKLASKHEPDGRVILAEFETFRLLNTYSPNNGWKDEENAFQRRRKWDKRIVEFLNKTSDKPLIWCGDLNVSHEEIDVSHPEFFATAKLNGYVPPNKEDCGQPGFTPSERGRFGATIKEGRLVDAYRYLHKEQEMESGFSWSGNPIGKYRGKRMRIDYFLVSEQLKDRIVSCKMHGRGIELEGFHGSDHCPVTLELSKPSSEMEQNQVSN.

2 stretches are compositionally biased toward basic and acidic residues: residues 1–12 (MKRFFKPIEKEN) and 23–39 (PEKRDGDGDGVEEEKNQ). The interval 1 to 42 (MKRFFKPIEKENSPAAKKPCLSPEKRDGDGDGVEEEKNQNEP) is disordered. Residue E80 coordinates Mg(2+). Y182 is a catalytic residue. Mg(2+) is bound by residues D222, N224, and D342. The active-site Proton donor/acceptor is D222.

This sequence belongs to the DNA repair enzymes AP/exoA family. Interacts with ROS1. ROS1 is required for APE1L to stably associate with the DNA substrate. It depends on Mg(2+) as a cofactor. As to expression, expressed in leaves, flower buds and developing siliques. Not detected in roots.

The protein resides in the nucleus. It is found in the nucleolus. Functionally, apurinic/apyrimidinic (AP) endonuclease involved in active DNA demethylation and gene imprinting. According to a report, also displays an in vitro 3'-phosphatase activity. According to another report, has no in vitro 3'-phosphatase activity. Catalyzes the conversion of the 3'-blocking groups 3'-phosphor-alpha,beta-unsaturated aldehyde (3'-PUA) generated by ROS1 to 3'-OH. Has a strong non-specific affinity to DNA. Redundant with APE2 and at least one functional allele is required for seed viability. The sequence is that of DNA-(apurinic or apyrimidinic site) endonuclease from Arabidopsis thaliana (Mouse-ear cress).